A 349-amino-acid chain; its full sequence is Putative F-box/LRR-repeat protein At3g16555 (349 aa).

In terms of domain architecture, F-box spans 1-48 (MVLLPWELEEDILSRLPPRSLVQFRSVCKRWNALFDVKSFNKDQFARA). One copy of the LRR repeat lies at 267–290 (VVWISLLTLPPNNLPNLFIVCYGI).

This Arabidopsis thaliana (Mouse-ear cress) protein is Putative F-box/LRR-repeat protein At3g16555.